Reading from the N-terminus, the 628-residue chain is tRNA uridine 5-carboxymethylaminomethyl modification enzyme MnmG (628 aa).

13–18 (GAGHAG) lines the FAD pocket. 273 to 287 (GPRYCPSIEDKIVRF) lines the NAD(+) pocket.

It belongs to the MnmG family. As to quaternary structure, homodimer. Heterotetramer of two MnmE and two MnmG subunits. Requires FAD as cofactor.

Its subcellular location is the cytoplasm. Functionally, NAD-binding protein involved in the addition of a carboxymethylaminomethyl (cmnm) group at the wobble position (U34) of certain tRNAs, forming tRNA-cmnm(5)s(2)U34. The protein is tRNA uridine 5-carboxymethylaminomethyl modification enzyme MnmG of Buchnera aphidicola subsp. Acyrthosiphon pisum (strain APS) (Acyrthosiphon pisum symbiotic bacterium).